The primary structure comprises 98 residues: NADH-ubiquinone oxidoreductase chain 4L (98 aa).

3 helical membrane-spanning segments follow: residues 1–21, 29–49, and 61–81; these read MSLVHMNIALAFTVALLGLLM, SLLCLEGMMLTLFIMGTIMIL, and IILLVFAACEAAVGLSLLVMV.

It belongs to the complex I subunit 4L family. In terms of assembly, core subunit of respiratory chain NADH dehydrogenase (Complex I) which is composed of 45 different subunits.

It localises to the mitochondrion inner membrane. The enzyme catalyses a ubiquinone + NADH + 5 H(+)(in) = a ubiquinol + NAD(+) + 4 H(+)(out). Its function is as follows. Core subunit of the mitochondrial membrane respiratory chain NADH dehydrogenase (Complex I) which catalyzes electron transfer from NADH through the respiratory chain, using ubiquinone as an electron acceptor. Part of the enzyme membrane arm which is embedded in the lipid bilayer and involved in proton translocation. In Sorex unguiculatus (Long-clawed shrew), this protein is NADH-ubiquinone oxidoreductase chain 4L (MT-ND4L).